Consider the following 194-residue polypeptide: MIPKLIVGLGNPEPKYDQTRHNIGFAVVDALAITWQCSWYDHKRFQGWFGEGLMAGQKTCLLKPRTYMNRSGQAVRAVVDWYKLDPQSVLVVYDDMDLPLGRLRLRQTGSAGGHNGMKSLISHLGTQDFPRLRLGIGKSDGSKDTIAHVLGKFSPSELPIVEKSLDLATEAIAHSLHHGIAKTMSLFNNRDVCP.

Position 16 (tyrosine 16) interacts with tRNA. The active-site Proton acceptor is the histidine 21. Residues tyrosine 67, asparagine 69, and asparagine 115 each contribute to the tRNA site.

Belongs to the PTH family. In terms of assembly, monomer.

Its subcellular location is the cytoplasm. It catalyses the reaction an N-acyl-L-alpha-aminoacyl-tRNA + H2O = an N-acyl-L-amino acid + a tRNA + H(+). Hydrolyzes ribosome-free peptidyl-tRNAs (with 1 or more amino acids incorporated), which drop off the ribosome during protein synthesis, or as a result of ribosome stalling. Its function is as follows. Catalyzes the release of premature peptidyl moieties from peptidyl-tRNA molecules trapped in stalled 50S ribosomal subunits, and thus maintains levels of free tRNAs and 50S ribosomes. This is Peptidyl-tRNA hydrolase from Synechocystis sp. (strain ATCC 27184 / PCC 6803 / Kazusa).